We begin with the raw amino-acid sequence, 674 residues long: Leucine-rich repeat transmembrane protein FLRT1 (674 aa).

Residues 1–51 (MVVAHSAATATTTPAATVTATVVMTTATMDLRDWLFLCYGLIAFLTEVIDS) form the signal peptide. Residues 52-552 (TTCPSVCRCD…QNAGPMAGLP (501 aa)) are Extracellular-facing. Intrachain disulfides connect cysteine 54-cysteine 60 and cysteine 58-cysteine 67. The LRRNT domain maps to 54–80 (CPSVCRCDNGFIYCNDRGLTSIPSDIP). 10 LRR repeats span residues 81-105 (DDAT…LKTK), 106-126 (VKVQ…INLP), 127-149 (RSLR…SLAR), 151-175 (PLLE…AFAD), 176-197 (SKQL…SGLP), 198-220 (HTLE…AFKG), 222-246 (NSLR…TFSR), 247-269 (LQNL…NLPS), 270-292 (AHLQ…TLAK), and 293-316 (MREL…LFDD). An N-linked (GlcNAc...) asparagine glycan is attached at asparagine 305. Positions 328–379 (NPWFCGCNLMWLRDWVRARAAVVNVRGLMCQGPEKVRGMAIKDITSEMDECF) constitute an LRRCT domain. Cysteine 332 and cysteine 357 are disulfide-bonded. In terms of domain architecture, Fibronectin type-III spans 437-532 (KTLVIQVKPL…VCAKAETADS (96 aa)). A helical transmembrane segment spans residues 553–573 (LAGIIGGAVALVFLFLVLGAI). Residues 574–674 (CWYVHRAGEL…GIPDVDYSYT (101 aa)) are Cytoplasmic-facing. A phosphotyrosine mark is found at tyrosine 600, tyrosine 633, and tyrosine 671.

As to quaternary structure, interacts with FGFR1. Interacts (via extracellular domain) with ADGRL1/LPHN1 and ADGRL3 (via olfactomedin-like domain). In terms of processing, phosphorylated in response to FGFR1 signaling, but is not a direct substrate of FGFR1 or SRC. A mutant where the Tyr phosphorylation sites have been replaced by Phe displays constitutive FGFR1-dependent activation of downstream MAP kinases. Post-translationally, N-glycosylated. Proteolytic cleavage in the juxtamembrane region gives rise to a soluble ectodomain. In terms of tissue distribution, detected in brain (at protein level).

The protein resides in the cell membrane. The protein localises to the endoplasmic reticulum membrane. Its subcellular location is the cytoplasmic vesicle membrane. It is found in the cytoplasm. It localises to the perinuclear region. The protein resides in the cell junction. The protein localises to the focal adhesion. Its subcellular location is the secreted. It is found in the cell projection. It localises to the neuron projection. Functionally, plays a role in fibroblast growth factor-mediated signaling cascades that lead to the activation of MAP kinases. Promotes neurite outgrowth via FGFR1-mediated activation of downstream MAP kinases. Promotes an increase both in neurite number and in neurite length. May play a role in cell-cell adhesion and cell guidance via its interaction with ADGRL1/LPHN1 and ADGRL3. The polypeptide is Leucine-rich repeat transmembrane protein FLRT1 (Mus musculus (Mouse)).